Here is a 685-residue protein sequence, read N- to C-terminus: DNA ligase (685 aa).

Residues 47-51, 96-97, and glutamate 125 contribute to the NAD(+) site; these read DSEYD and SL. Lysine 127 (N6-AMP-lysine intermediate) is an active-site residue. 4 residues coordinate NAD(+): arginine 148, glutamate 185, lysine 304, and lysine 328. Residues cysteine 422, cysteine 425, cysteine 440, and cysteine 446 each coordinate Zn(2+). One can recognise a BRCT domain in the interval 605–685; the sequence is ADAQPLKGQT…ALLALFAANR (81 aa).

This sequence belongs to the NAD-dependent DNA ligase family. LigA subfamily. Requires Mg(2+) as cofactor. Mn(2+) serves as cofactor.

It catalyses the reaction NAD(+) + (deoxyribonucleotide)n-3'-hydroxyl + 5'-phospho-(deoxyribonucleotide)m = (deoxyribonucleotide)n+m + AMP + beta-nicotinamide D-nucleotide.. Functionally, DNA ligase that catalyzes the formation of phosphodiester linkages between 5'-phosphoryl and 3'-hydroxyl groups in double-stranded DNA using NAD as a coenzyme and as the energy source for the reaction. It is essential for DNA replication and repair of damaged DNA. In Shewanella sp. (strain W3-18-1), this protein is DNA ligase.